Here is a 362-residue protein sequence, read N- to C-terminus: tRNA-specific 2-thiouridylase MnmA (362 aa).

ATP contacts are provided by residues 13 to 20 (GLSGGVDS) and Met-39. The segment at 99 to 101 (NPD) is interaction with target base in tRNA. Cys-104 (nucleophile) is an active-site residue. Cys-104 and Cys-200 form a disulfide bridge. Gly-128 contacts ATP. Residues 150-152 (KDQ) are interaction with tRNA. Cys-200 serves as the catalytic Cysteine persulfide intermediate.

Belongs to the MnmA/TRMU family.

Its subcellular location is the cytoplasm. It catalyses the reaction S-sulfanyl-L-cysteinyl-[protein] + uridine(34) in tRNA + AH2 + ATP = 2-thiouridine(34) in tRNA + L-cysteinyl-[protein] + A + AMP + diphosphate + H(+). Its function is as follows. Catalyzes the 2-thiolation of uridine at the wobble position (U34) of tRNA, leading to the formation of s(2)U34. This Coxiella burnetii (strain Dugway 5J108-111) protein is tRNA-specific 2-thiouridylase MnmA.